Reading from the N-terminus, the 41-residue chain is Photosystem I reaction center subunit IX (41 aa).

Residues 7 to 27 (YLSTAPVLLTLWMTFTAGFII) traverse the membrane as a helical segment.

It belongs to the PsaJ family.

The protein resides in the plastid. Its subcellular location is the chloroplast thylakoid membrane. May help in the organization of the PsaE and PsaF subunits. The polypeptide is Photosystem I reaction center subunit IX (Trieres chinensis (Marine centric diatom)).